The primary structure comprises 388 residues: GTPase Obg (388 aa).

One can recognise an Obg domain in the interval 4 to 162; the sequence is SNFVDYVKIY…MTVILELKLL (159 aa). Positions 18 to 45 are disordered; the sequence is KGGRGSTHMRREKYTPNGGPDGGDGGRG. Positions 36–45 are enriched in gly residues; that stretch reads GPDGGDGGRG. Residues 163–329 enclose the OBG-type G domain; the sequence is ADVGLVGFPN…LKDILWTELN (167 aa). GTP contacts are provided by residues 169 to 176, 194 to 198, 216 to 219, 283 to 286, and 310 to 312; these read GFPNAGKS, FTTLE, DIPG, TKSD, and SSV. 2 residues coordinate Mg(2+): serine 176 and threonine 196. The segment at 352–388 is disordered; it reads LKDMGEDEELDYEYEDDGDGDEDDLDYEYEEEDWEDK. The segment covering 356–388 has biased composition (acidic residues); that stretch reads GEDEELDYEYEDDGDGDEDDLDYEYEEEDWEDK.

This sequence belongs to the TRAFAC class OBG-HflX-like GTPase superfamily. OBG GTPase family. Monomer. Requires Mg(2+) as cofactor.

The protein resides in the cytoplasm. An essential GTPase which binds GTP, GDP and possibly (p)ppGpp with moderate affinity, with high nucleotide exchange rates and a fairly low GTP hydrolysis rate. Plays a role in control of the cell cycle, stress response, ribosome biogenesis and in those bacteria that undergo differentiation, in morphogenesis control. This is GTPase Obg from Bacteroides fragilis (strain ATCC 25285 / DSM 2151 / CCUG 4856 / JCM 11019 / LMG 10263 / NCTC 9343 / Onslow / VPI 2553 / EN-2).